The chain runs to 1042 residues: Protein phosphatase Slingshot homolog 1 (1042 aa).

The span at 1–12 shows a compositional bias: polar residues; sequence MALVTLQRSPTP. Residues 1-29 are disordered; it reads MALVTLQRSPTPSAASSSASNSELEAGSD. An N-acetylalanine modification is found at Ala2. The span at 13–22 shows a compositional bias: low complexity; the sequence is SAASSSASNS. Phosphoserine is present on residues Ser37 and Ser57. The DEK-C domain occupies 249–304; sequence ERTERLIKAKLRSIMMSQDLENVTSKEIRNELEKQMNCNLKEFKEFIDNEMLLILG. The 142-residue stretch at 308-449 folds into the Tyrosine-protein phosphatase domain; sequence KPSLIFDHLY…LSEYEGILDA (142 aa). The active-site Phosphocysteine intermediate is the Cys393. Ser516 bears the Phosphoserine mark. Disordered regions lie at residues 576–609, 668–766, 858–900, and 915–942; these read FGNS…ASTQ, MERH…PHCD, IPEE…LDHT, and PTSS…KPGL. The span at 675–693 shows a compositional bias: polar residues; that stretch reads SSSAICTQPTFLPHVTSSP. The segment covering 697–712 has biased composition (low complexity); the sequence is ASSRSRAPERPASGPA. A compositionally biased stretch (polar residues) spans 886–900; it reads LQKSPTSTLPRLDHT. A Phosphoserine modification is found at Ser889. Positions 889 to 1042 are interaction with YWHAG; it reads SPTSTLPRLD…LKSPSRVNKS (154 aa). Residues 917 to 935 are compositionally biased toward low complexity; sequence SSSISSNLTRSSSSDSIHS. A Phosphoserine modification is found at Ser970. A compositionally biased stretch (polar residues) spans 985–995; the sequence is SSEADTSTIAD. The interval 985–1042 is disordered; sequence SSEADTSTIADSQDAKCGLSSSFLPEPQSAPRDPAATSKSSGKSAPEHLKSPSRVNKS.

This sequence belongs to the protein-tyrosine phosphatase family. As to quaternary structure, interacts with the 14-3-3 proteins YWHAB, YWHAG, YWHAQ, and YWHAZ. Interaction with 14-3-3 proteins inhibits phosphatase activity and also blocks recruitment to lamellipodia and stimulation by actin. Interacts with actin and this stimulates phosphatase activity. Interacts with LIMK1. In terms of processing, phosphorylated. Inhibitory phosphorylation by PAK4 promotes binding to YWHAZ. Phosphorylation at Ser-970 is decreased by stimuli which promote actin reorganization and lamellipodia formation. Can be dephosphorylated and activated by PPP3CA/calcineurin A. Phosphorylation decreases immediately prior to telophase. In terms of tissue distribution, expressed in brain, heart, kidney and thymus. Also expressed at lower levels in liver, skeletal muscle, small intestine and spleen.

The protein resides in the cytoplasm. It is found in the cytoskeleton. It localises to the cleavage furrow. The protein localises to the midbody. It catalyses the reaction O-phospho-L-tyrosyl-[protein] + H2O = L-tyrosyl-[protein] + phosphate. The enzyme catalyses O-phospho-L-seryl-[protein] + H2O = L-seryl-[protein] + phosphate. The catalysed reaction is O-phospho-L-threonyl-[protein] + H2O = L-threonyl-[protein] + phosphate. In terms of biological role, protein phosphatase which regulates actin filament dynamics. Dephosphorylates and activates the actin binding/depolymerizing factor cofilin, which subsequently binds to actin filaments and stimulates their disassembly. Inhibitory phosphorylation of cofilin is mediated by LIMK1, which may also be dephosphorylated and inactivated by this protein. The sequence is that of Protein phosphatase Slingshot homolog 1 from Mus musculus (Mouse).